The sequence spans 158 residues: NAD(P)H-quinone oxidoreductase subunit J, chloroplastic (158 aa).

It belongs to the complex I 30 kDa subunit family. NDH is composed of at least 16 different subunits, 5 of which are encoded in the nucleus.

It is found in the plastid. The protein resides in the chloroplast thylakoid membrane. The catalysed reaction is a plastoquinone + NADH + (n+1) H(+)(in) = a plastoquinol + NAD(+) + n H(+)(out). The enzyme catalyses a plastoquinone + NADPH + (n+1) H(+)(in) = a plastoquinol + NADP(+) + n H(+)(out). In terms of biological role, NDH shuttles electrons from NAD(P)H:plastoquinone, via FMN and iron-sulfur (Fe-S) centers, to quinones in the photosynthetic chain and possibly in a chloroplast respiratory chain. The immediate electron acceptor for the enzyme in this species is believed to be plastoquinone. Couples the redox reaction to proton translocation, and thus conserves the redox energy in a proton gradient. This is NAD(P)H-quinone oxidoreductase subunit J, chloroplastic from Lupinus luteus (European yellow lupine).